We begin with the raw amino-acid sequence, 182 residues long: Large ribosomal subunit protein uL6 (182 aa).

Belongs to the universal ribosomal protein uL6 family. In terms of assembly, part of the 50S ribosomal subunit.

In terms of biological role, this protein binds to the 23S rRNA, and is important in its secondary structure. It is located near the subunit interface in the base of the L7/L12 stalk, and near the tRNA binding site of the peptidyltransferase center. This is Large ribosomal subunit protein uL6 from Carboxydothermus hydrogenoformans (strain ATCC BAA-161 / DSM 6008 / Z-2901).